We begin with the raw amino-acid sequence, 926 residues long: DNA topoisomerase 3-alpha (926 aa).

The 145-residue stretch at 10–154 (TVLNVAEKPS…NLFIRRAHFS (145 aa)) folds into the Toprim domain. 3 residues coordinate Mg(2+): glutamate 16, aspartate 123, and aspartate 125. A Topo IA-type catalytic domain is found at 172–604 (NQLFAEAVDA…CLQQMKACFL (433 aa)). The interval 219–224 (SYGPCQ) is interaction with DNA. The O-(5'-phospho-DNA)-tyrosine intermediate role is filled by tyrosine 342. A C4-type zinc finger spans residues 642–670 (CNLCNESDMALRKNRDGNFMVGCMNYPQC). Disordered stretches follow at residues 740–760 (SRSQ…QGSN) and 775–806 (HAST…TVSC). Polar residues predominate over residues 750–760 (TAPSNNIQGSN). Residues 767 to 782 (CIHCQQRGHASTNCPS) form a CCHC-type 1 zinc finger. Zn(2+)-binding residues include cysteine 806, cysteine 809, cysteine 831, and cysteine 836. The segment at 806–845 (CNTCGSQCVLRTANTEANRGRQFFSCPTQGCSFFAWEDSI) adopts a GRF-type zinc-finger fold. The interval 849-890 (SGNATTGSNSGGSGRRGSRGRGRGGRGGQSSGGRRGSGTSFV) is disordered. Positions 873–884 (GRGGQSSGGRRG) are enriched in gly residues. Residues 901 to 917 (RCFSCGDPSHFANACPN) form a CCHC-type 2 zinc finger.

The protein belongs to the type IA topoisomerase family. Component of the RMI complex, containing at least TOP3A and RMI1. The RMI complex interacts with RECQL4A. Mg(2+) is required as a cofactor.

It catalyses the reaction ATP-independent breakage of single-stranded DNA, followed by passage and rejoining.. In terms of biological role, releases the supercoiling and torsional tension of DNA introduced during the DNA replication and transcription by transiently cleaving and rejoining one strand of the DNA duplex. Introduces a single-strand break via transesterification at a target site in duplex DNA. The scissile phosphodiester is attacked by the catalytic tyrosine of the enzyme, resulting in the formation of a DNA-(5'-phosphotyrosyl)-enzyme intermediate and the expulsion of a 3'-OH DNA strand. The free DNA strand then undergoes passage around the unbroken strand thus removing DNA supercoils. Finally, in the religation step, the DNA 3'-OH attacks the covalent intermediate to expel the active-site tyrosine and restore the DNA phosphodiester backbone. Essential component of the RMI complex, a complex that plays an important role in the resolution step of homologous recombination, in a process called Holliday Junction dissolution, to limit DNA crossover formation in cells. Together with RMI1, is essential for the resolution of meiotic recombination intermediates, a step that prevents entanglement of the parental chromosomes. May have DNA decatenation activity. The protein is DNA topoisomerase 3-alpha (TOP3A) of Arabidopsis thaliana (Mouse-ear cress).